The chain runs to 547 residues: ATP synthase subunit alpha (547 aa).

172–179 (GDRKTGKT) is an ATP binding site.

It belongs to the ATPase alpha/beta chains family. In terms of assembly, F-type ATPases have 2 components, CF(1) - the catalytic core - and CF(0) - the membrane proton channel. CF(1) has five subunits: alpha(3), beta(3), gamma(1), delta(1), epsilon(1). CF(0) has three main subunits: a(1), b(2) and c(9-12). The alpha and beta chains form an alternating ring which encloses part of the gamma chain. CF(1) is attached to CF(0) by a central stalk formed by the gamma and epsilon chains, while a peripheral stalk is formed by the delta and b chains.

It localises to the cell membrane. It catalyses the reaction ATP + H2O + 4 H(+)(in) = ADP + phosphate + 5 H(+)(out). Its function is as follows. Produces ATP from ADP in the presence of a proton gradient across the membrane. The alpha chain is a regulatory subunit. The chain is ATP synthase subunit alpha from Corynebacterium glutamicum (strain R).